We begin with the raw amino-acid sequence, 153 residues long: MKQKAKDENVLAQNRQARHDYFIKDTYEAGIALTGTEIKSVRARHVTLRDGYVQIINGSAFLENVHIDEYKEGNRYNHDPLRSRRLLLHKKEIAKLADVKAQKGMTIVPLKVYLKHGFAKVLIGVAQGKKEYDKRETIKKRDQDRELRRKYRI.

The protein belongs to the SmpB family.

It localises to the cytoplasm. Required for rescue of stalled ribosomes mediated by trans-translation. Binds to transfer-messenger RNA (tmRNA), required for stable association of tmRNA with ribosomes. tmRNA and SmpB together mimic tRNA shape, replacing the anticodon stem-loop with SmpB. tmRNA is encoded by the ssrA gene; the 2 termini fold to resemble tRNA(Ala) and it encodes a 'tag peptide', a short internal open reading frame. During trans-translation Ala-aminoacylated tmRNA acts like a tRNA, entering the A-site of stalled ribosomes, displacing the stalled mRNA. The ribosome then switches to translate the ORF on the tmRNA; the nascent peptide is terminated with the 'tag peptide' encoded by the tmRNA and targeted for degradation. The ribosome is freed to recommence translation, which seems to be the essential function of trans-translation. The sequence is that of SsrA-binding protein from Lactobacillus delbrueckii subsp. bulgaricus (strain ATCC 11842 / DSM 20081 / BCRC 10696 / JCM 1002 / NBRC 13953 / NCIMB 11778 / NCTC 12712 / WDCM 00102 / Lb 14).